We begin with the raw amino-acid sequence, 307 residues long: MTQKVIVIVGPTAVGKTALSIDIAKKYKGQIISGDSMQVYRNLDIGTAKITPDEMGDIKHYMIDILQVQQRFSVADFIDNCRKDIKEIANDDNIPIIVGGTGFYLQALLDGYSLGGDTFDQLSIERRKKWQLFMEKNGKEKLWEELAKLDIVAARKIPINNFRRVIRALEVIEQTGRLFSEQHDESNEEFEPLLIGLNTQRSTLYERINKRVDIMIQTGLIEEAKYLYNLGGATLPAGKGIGYKEFYPYFDGEISKDEAIELVKRNSRRYAKRQLTWFRNKMNVVWFDLVNNPEDIKKIYKLIDDWI.

10 to 17 (GPTAVGKT) is an ATP binding site. Position 12–17 (12–17 (TAVGKT)) interacts with substrate. An interaction with substrate tRNA region spans residues 35–38 (DSMQ).

This sequence belongs to the IPP transferase family. As to quaternary structure, monomer. The cofactor is Mg(2+).

The enzyme catalyses adenosine(37) in tRNA + dimethylallyl diphosphate = N(6)-dimethylallyladenosine(37) in tRNA + diphosphate. Catalyzes the transfer of a dimethylallyl group onto the adenine at position 37 in tRNAs that read codons beginning with uridine, leading to the formation of N6-(dimethylallyl)adenosine (i(6)A). The protein is tRNA dimethylallyltransferase of Ligilactobacillus salivarius (strain UCC118) (Lactobacillus salivarius).